The chain runs to 195 residues: Glutathione S-transferase class-mu 26 kDa isozyme (195 aa).

Residues 1–83 enclose the GST N-terminal domain; sequence MAPKLGYWKI…YIADKHNMLG (83 aa). Residues 7–8, 41–45, 54–55, and 67–68 contribute to the glutathione site; these read YW, WRNEK, NL, and QS. A GST C-terminal domain is found at 85-195; it reads CPKERAEISM…TFGGGDAPPK (111 aa). Tyrosine 111 contributes to the substrate binding site.

The protein belongs to the GST superfamily. Mu family. As to quaternary structure, homodimer.

The enzyme catalyses RX + glutathione = an S-substituted glutathione + a halide anion + H(+). In terms of biological role, conjugation of reduced glutathione to a wide number of exogenous and endogenous hydrophobic electrophiles. Its function is as follows. GST isoenzymes appear to play a central role in the parasite detoxification system. Other functions are also suspected including a role in increasing the solubility of haematin in the parasite gut. This is Glutathione S-transferase class-mu 26 kDa isozyme from Schistosoma mansoni (Blood fluke).